Reading from the N-terminus, the 280-residue chain is 4-deoxy-L-threo-5-hexosulose-uronate ketol-isomerase (280 aa).

Zn(2+) contacts are provided by histidine 198, histidine 200, glutamate 205, and histidine 247.

The protein belongs to the KduI family. Zn(2+) serves as cofactor.

The catalysed reaction is 5-dehydro-4-deoxy-D-glucuronate = 3-deoxy-D-glycero-2,5-hexodiulosonate. It functions in the pathway glycan metabolism; pectin degradation; 2-dehydro-3-deoxy-D-gluconate from pectin: step 4/5. Functionally, catalyzes the isomerization of 5-dehydro-4-deoxy-D-glucuronate to 3-deoxy-D-glycero-2,5-hexodiulosonate. The sequence is that of 4-deoxy-L-threo-5-hexosulose-uronate ketol-isomerase from Bacteroides fragilis (strain ATCC 25285 / DSM 2151 / CCUG 4856 / JCM 11019 / LMG 10263 / NCTC 9343 / Onslow / VPI 2553 / EN-2).